The following is a 149-amino-acid chain: Calmodulin-like protein 3 (149 aa).

EF-hand domains follow at residues 8–43, 44–79, 81–116, and 117–149; these read EQIA…LGQN, PTEA…KMKD, DSEE…LGEK, and LSDE…LVSK. The Ca(2+) site is built by Asp21, Asp23, Asp25, Cys27, Glu32, Asp57, Asp59, Asn61, Thr63, Glu68, Asp94, Asp96, Asn98, Glu105, Asp130, Asp132, Asp134, Gln136, and Glu141.

This sequence belongs to the calmodulin family. Interacts with MYO10, the interaction is calcium-dependent and essential for MYO10 function in filopodial extension.

Functionally, may function as a specific light chain of unconventional myosin-10 (MYO10), also enhances MYO10 translation, possibly by acting as a chaperone for the emerging MYO10 heavy chain protein. May compete with calmodulin by binding, with different affinities, to cellular substrates. In Rattus norvegicus (Rat), this protein is Calmodulin-like protein 3 (Calml3).